A 141-amino-acid chain; its full sequence is MSNITIYHNPACGTSRNTLEMIRNSGNEPTVIHYLENPPSRDELVKLIADMGISVRALLRKNVEPYEELGLEEDKFTDDQLIDFMLQHPILINRPIVVTPLGTRLCRPSEVVLDILPDAQKGAFAKEDGEKVVDEAGKRLK.

C12 acts as the Nucleophile; cysteine thioarsenate intermediate in catalysis.

This sequence belongs to the ArsC family.

The enzyme catalyses [glutaredoxin]-dithiol + arsenate + glutathione + H(+) = glutathionyl-S-S-[glutaredoxin] + arsenite + H2O. Functionally, involved in resistance to arsenate. Catalyzes the reduction of arsenate [As(V)] to arsenite [As(III)]. This is Arsenate reductase (arsC) from Acidiphilium multivorum (strain DSM 11245 / JCM 8867 / NBRC 100883 / AIU 301).